The following is a 70-amino-acid chain: Myotoxin (70 aa).

Residues 1 to 22 (MKILYLLFAFLFLAFLSEPGNA) form the signal peptide. Cystine bridges form between cysteine 26–cysteine 58, cysteine 33–cysteine 52, and cysteine 40–cysteine 59.

Belongs to the crotamine-myotoxin family. Monomer. In terms of tissue distribution, expressed by the venom gland.

The protein resides in the secreted. Its function is as follows. Cationic peptide that possesses multiple functions. It acts as a cell-penetrating peptide (CPP), and as a potent voltage-gated potassium channel (Kv) inhibitor. It exhibits antimicrobial activities, hind limb paralysis, and severe muscle necrosis by a non-enzymatic mechanism. In Crotalus adamanteus (Eastern diamondback rattlesnake), this protein is Myotoxin.